Consider the following 472-residue polypeptide: Na(+)/H(+) antiporter NhaA (472 aa).

10 helical membrane-spanning segments follow: residues 24–44, 66–86, 108–128, 156–176, 196–216, 234–254, 290–310, 312–332, 361–381, and 392–412; these read ISGL…NLPA, LPIG…TVGL, LCAV…TALF, GWAV…ALFA, LLAI…YWFI, VPWI…FEAG, PFSA…VHFE, MSPL…LVVG, MIPA…IASL, and ARFG…VLLS. Positions 422–472 are disordered; that stretch reads AAAAAADEEDDESIDGDGIGQPSHTTEPTTPTEHPGTLADGTASVEIDFRH. A compositionally biased stretch (acidic residues) spans 427-436; the sequence is ADEEDDESID. The segment covering 445-456 has biased composition (low complexity); it reads HTTEPTTPTEHP.

The protein belongs to the NhaA Na(+)/H(+) (TC 2.A.33) antiporter family.

The protein localises to the cell membrane. It catalyses the reaction Na(+)(in) + 2 H(+)(out) = Na(+)(out) + 2 H(+)(in). In terms of biological role, na(+)/H(+) antiporter that extrudes sodium in exchange for external protons. This is Na(+)/H(+) antiporter NhaA from Bifidobacterium longum (strain NCC 2705).